The chain runs to 924 residues: Lon protease homolog 3, mitochondrial (924 aa).

A mitochondrion-targeting transit peptide spans 1-63; sequence MMPKRFNTSG…PVQSLLLFRA (63 aa). The 214-residue stretch at 112-325 folds into the Lon N-terminal domain; that stretch reads VIALPLPHKP…LTLELVKKQV (214 aa). 447 to 454 contacts ATP; sequence GPPGVGKT. Positions 738–922 constitute a Lon proteolytic domain; it reads QTPVGVVMGL…EKIFDLAFNY (185 aa). Catalysis depends on residues S828 and K871.

It belongs to the peptidase S16 family. As to quaternary structure, homohexamer or homoheptamer. Organized in a ring with a central cavity.

The protein localises to the mitochondrion matrix. It catalyses the reaction Hydrolysis of proteins in presence of ATP.. Functionally, ATP-dependent serine protease that mediates the selective degradation of misfolded, unassembled or oxidatively damaged polypeptides as well as certain short-lived regulatory proteins in the mitochondrial matrix. May also have a chaperone function in the assembly of inner membrane protein complexes. Participates in the regulation of mitochondrial gene expression and in the maintenance of the integrity of the mitochondrial genome. Binds to mitochondrial DNA in a site-specific manner. The sequence is that of Lon protease homolog 3, mitochondrial (LON3) from Arabidopsis thaliana (Mouse-ear cress).